Here is a 429-residue protein sequence, read N- to C-terminus: 3-phosphoshikimate 1-carboxyvinyltransferase (429 aa).

Residues Lys23, Ser24, and Arg28 each contribute to the 3-phosphoshikimate site. Lys23 contacts phosphoenolpyruvate. Phosphoenolpyruvate contacts are provided by Gly95 and Arg123. 3-phosphoshikimate is bound by residues Ser168, Gln170, Asp316, and Lys343. Gln170 provides a ligand contact to phosphoenolpyruvate. Asp316 serves as the catalytic Proton acceptor. Residues Arg347 and Arg389 each coordinate phosphoenolpyruvate.

It belongs to the EPSP synthase family. In terms of assembly, monomer.

The protein resides in the cytoplasm. The catalysed reaction is 3-phosphoshikimate + phosphoenolpyruvate = 5-O-(1-carboxyvinyl)-3-phosphoshikimate + phosphate. Its pathway is metabolic intermediate biosynthesis; chorismate biosynthesis; chorismate from D-erythrose 4-phosphate and phosphoenolpyruvate: step 6/7. Functionally, catalyzes the transfer of the enolpyruvyl moiety of phosphoenolpyruvate (PEP) to the 5-hydroxyl of shikimate-3-phosphate (S3P) to produce enolpyruvyl shikimate-3-phosphate and inorganic phosphate. This is 3-phosphoshikimate 1-carboxyvinyltransferase from Bacillus cereus (strain AH187).